A 446-amino-acid chain; its full sequence is Cyclin-F2-2 (446 aa).

Residues 191–216 (YNGDNDAPAPDNSTASRPQLCAPYDD) form a disordered region.

This sequence belongs to the cyclin family. Cyclin F subfamily.

This is Cyclin-F2-2 (CYCF2-2) from Oryza sativa subsp. japonica (Rice).